A 165-amino-acid chain; its full sequence is Lipoprotein signal peptidase (165 aa).

Transmembrane regions (helical) follow at residues Phe-9 to Tyr-29, Lys-69 to Leu-89, and Ile-98 to Phe-118. Catalysis depends on residues Asp-124 and Asp-142. A helical transmembrane segment spans residues Trp-133–Val-153.

It belongs to the peptidase A8 family.

The protein localises to the cell inner membrane. It carries out the reaction Release of signal peptides from bacterial membrane prolipoproteins. Hydrolyzes -Xaa-Yaa-Zaa-|-(S,diacylglyceryl)Cys-, in which Xaa is hydrophobic (preferably Leu), and Yaa (Ala or Ser) and Zaa (Gly or Ala) have small, neutral side chains.. The protein operates within protein modification; lipoprotein biosynthesis (signal peptide cleavage). In terms of biological role, this protein specifically catalyzes the removal of signal peptides from prolipoproteins. The protein is Lipoprotein signal peptidase of Chlamydia caviae (strain ATCC VR-813 / DSM 19441 / 03DC25 / GPIC) (Chlamydophila caviae).